The chain runs to 444 residues: Protein CPn_0808/CP_1063/CPj0808/CpB0837 (444 aa).

Positions 1–13 (MTSGVSGSSSQDP) are enriched in polar residues. Residues 1–124 (MTSGVSGSSS…NNYDSPSLPT (124 aa)) form a disordered region. Over residues 15-24 (LAAQLAQSSQ) the composition is skewed to low complexity. A compositionally biased stretch (polar residues) spans 25-42 (KAGNAQSGHDTKNVTKQG). A compositionally biased stretch (basic and acidic residues) spans 77 to 86 (SKGEKSEKSG). Low complexity predominate over residues 88–103 (SKSSTSVASASETATA). Residues 113 to 124 (RQNNYDSPSLPT) are compositionally biased toward polar residues.

The protein belongs to the chlamydial CPn_0808/CT_579/TC_0868 family.

This is Protein CPn_0808/CP_1063/CPj0808/CpB0837 from Chlamydia pneumoniae (Chlamydophila pneumoniae).